Consider the following 679-residue polypeptide: WD repeat-containing protein 48 homolog (679 aa).

8 WD repeats span residues 26 to 65, 71 to 110, 113 to 152, 164 to 203, 206 to 245, 248 to 287, 290 to 329, and 349 to 388; these read QHRNGVNALQLDSNNGKLYSAGRDAIIRVWNTRTEANEKY, HHNDWVNDIVLCCNGRNLISASCDTTVKVWNAHKGFCMST, THRDYVQALAYAKDREQVASAGLDKAIFLWDVNTLTALTA, GSKDSIYSLAMNPSGTVIVSGSTENILRIWDPRTCMRSMK, GHTENVRCLVVSPDGNQVVSGSSDGTIKVWNLGQQRCIQT, VHKEGVWSLLMSENFQYIISGSRDRNIIVTEMRNPSNKML, EEKAPVLSLGYNIDKTGVWATTWNSDIRCWKLPMYDRCVL, and KGGAAIKECTVLNDKRYIITKDSQDQVVVYDVLRVTKKEE. The segment at 594 to 615 is disordered; sequence PSAGNANNSLQNSQSDANSEGS.

Belongs to the WD repeat WDR48 family. In terms of assembly, catalytic component of the Usp12-46 deubiquitylase complex consisting of Usp12-46, Wdr20 and Uaf1; regulatory subunit that, together wtih Wdr20, stabilizes Usp12-46. The Usp12-46 deubiquitylase complex associates with arr/arrow; the interaction leads to deubiquitination and stabilization of arr/arrow.

Regulatory component of the Usp12-46 deubiquitylase complex. activates deubiquitination by increasing the catalytic turnover without increasing the affinity of deubiquitinating enzymes for the substrate. The complex deubiquitylates the wg/wingless-signaling receptor arr/arrow, which stabilizes the receptor and increases its concentration at the cell surface; this enhances the sensitivity of cells to wg/wingless-signal stimulation. This increases the amplitude and spatial range of the signaling response to the wg/wingless morphogen gradient, facilitating the precise concentration-dependent regulation of its target genes. Together with Wdr20 and Usp12-46 required for wg/wingless-mediated signaling in the wing imaginal disc and for wg/wingless-dependent regulation of intestinal stem cell proliferation. The chain is WD repeat-containing protein 48 homolog from Drosophila mojavensis (Fruit fly).